Reading from the N-terminus, the 268-residue chain is Tryptophan synthase alpha chain (268 aa).

Active-site proton acceptor residues include Glu-49 and Asp-60.

This sequence belongs to the TrpA family. Tetramer of two alpha and two beta chains.

It carries out the reaction (1S,2R)-1-C-(indol-3-yl)glycerol 3-phosphate + L-serine = D-glyceraldehyde 3-phosphate + L-tryptophan + H2O. Its pathway is amino-acid biosynthesis; L-tryptophan biosynthesis; L-tryptophan from chorismate: step 5/5. Functionally, the alpha subunit is responsible for the aldol cleavage of indoleglycerol phosphate to indole and glyceraldehyde 3-phosphate. The sequence is that of Tryptophan synthase alpha chain from Xanthomonas oryzae pv. oryzae (strain MAFF 311018).